Here is a 112-residue protein sequence, read N- to C-terminus: Nucleoid-associated protein FTN_1196 (112 aa).

The disordered stretch occupies residues 1–27 (MNFDMSKLMQQAQKMQEQMKKAQQERE). Residues 17–27 (EQMKKAQQERE) are compositionally biased toward basic and acidic residues.

Belongs to the YbaB/EbfC family. As to quaternary structure, homodimer.

It localises to the cytoplasm. The protein resides in the nucleoid. Binds to DNA and alters its conformation. May be involved in regulation of gene expression, nucleoid organization and DNA protection. The sequence is that of Nucleoid-associated protein FTN_1196 from Francisella tularensis subsp. novicida (strain U112).